Here is a 186-residue protein sequence, read N- to C-terminus: Ribosome-recycling factor (186 aa).

The interval 135-156 (DANDEVKKLQKDKAVSEDEGKK) is disordered.

This sequence belongs to the RRF family.

The protein resides in the cytoplasm. Responsible for the release of ribosomes from messenger RNA at the termination of protein biosynthesis. May increase the efficiency of translation by recycling ribosomes from one round of translation to another. The chain is Ribosome-recycling factor from Bdellovibrio bacteriovorus (strain ATCC 15356 / DSM 50701 / NCIMB 9529 / HD100).